Here is a 146-residue protein sequence, read N- to C-terminus: UPF0178 protein LMOf2365_1475 (146 aa).

This sequence belongs to the UPF0178 family.

The sequence is that of UPF0178 protein LMOf2365_1475 from Listeria monocytogenes serotype 4b (strain F2365).